Reading from the N-terminus, the 394-residue chain is 3-phenylpropionate/cinnamic acid dioxygenase ferredoxin--NAD(+) reductase component (394 aa).

5 to 36 (TFIIVGAGQAGAMAAATLRQQQFDGDIILIGK) contacts FAD. 146–174 (RILIVGGGVIGLELAATSCELGANVTVIE) is an NAD(+) binding site.

This sequence belongs to the bacterial ring-hydroxylating dioxygenase ferredoxin reductase family. As to quaternary structure, this dioxygenase system consists of four proteins: the two subunits of the hydroxylase component (HcaE and HcaF), a ferredoxin (HcaC) and a ferredoxin reductase (HcaD). FAD serves as cofactor.

The catalysed reaction is 2 reduced [2Fe-2S]-[ferredoxin] + NAD(+) + H(+) = 2 oxidized [2Fe-2S]-[ferredoxin] + NADH. Its pathway is aromatic compound metabolism; 3-phenylpropanoate degradation. In terms of biological role, part of the multicomponent 3-phenylpropionate dioxygenase, that converts 3-phenylpropionic acid (PP) and cinnamic acid (CI) into 3-phenylpropionate-dihydrodiol (PP-dihydrodiol) and cinnamic acid-dihydrodiol (CI-dihydrodiol), respectively. This Photorhabdus laumondii subsp. laumondii (strain DSM 15139 / CIP 105565 / TT01) (Photorhabdus luminescens subsp. laumondii) protein is 3-phenylpropionate/cinnamic acid dioxygenase ferredoxin--NAD(+) reductase component.